A 312-amino-acid polypeptide reads, in one-letter code: Small kinetochore-associated protein (312 aa).

Basic and acidic residues predominate over residues 1 to 13 (MATHKAEAQETDF). Disordered regions lie at residues 1–32 (MATHKAEAQETDFRTTGPPTDLEQCPFPPSSR), 55–176 (LKRS…KDKN), and 221–242 (KGLNSGQETQESKQEPSTDPTD). Residues 75–84 (RPTTMASSKT) show a composition bias toward polar residues. Composition is skewed to basic and acidic residues over residues 131 to 143 (DVTKVTKPRRENG) and 166 to 176 (QKPEEDLKDKN). An interaction with SPAG5 region spans residues 156-312 (IRSSYKPLSK…LEEMEQLLEM (157 aa)). A coiled-coil region spans residues 169-210 (EEDLKDKNELLEAVNKQLHQKLTETQGELKDLTQKVELLEKF). Positions 246–288 (LLETLKDELKLFNETAKKQMEELQALKVKLKLKEKERIQFLEQ) form a coiled coil.

In terms of assembly, part of an astrin (SPAG5)-kinastrin (SKAP) complex containing KNSTRN, SPAG5, PLK1, DYNLL1 and SGO2. Interacts with SPAG5. Directly binds to microtubules, although at relatively low affinity. Interacts with CENPE; this interaction greatly favors microtubule-binding. Interacts with DSN1/MIS13; leading to localization to kinetochores. Interacts with MAPRE1/EB1; leading to localization to the microtubule plus ends. Interacts with PRPF19. Interacts with DYNLL1. Interacts with MAP4.

It localises to the nucleus. The protein resides in the chromosome. Its subcellular location is the centromere. The protein localises to the kinetochore. It is found in the cytoplasm. It localises to the cytoskeleton. The protein resides in the spindle pole. Its subcellular location is the microtubule organizing center. Essential component of the mitotic spindle required for faithful chromosome segregation and progression into anaphase. Promotes the metaphase-to-anaphase transition and is required for chromosome alignment, normal timing of sister chromatid segregation, and maintenance of spindle pole architecture. The astrin (SPAG5)-kinastrin (SKAP) complex promotes stable microtubule-kinetochore attachments. Required for kinetochore oscillations and dynamics of microtubule plus-ends during live cell mitosis, possibly by forming a link between spindle microtubule plus-ends and mitotic chromosomes to achieve faithful cell division. The polypeptide is Small kinetochore-associated protein (Knstrn) (Rattus norvegicus (Rat)).